Reading from the N-terminus, the 153-residue chain is ORM1-like protein 3 (153 aa).

The interval Met1 to Met17 is important for ceramide level-sensing. Residues Met1–Gly21 lie on the Cytoplasmic side of the membrane. The next 2 helical transmembrane spans lie at Ile22–Phe42 and Val43–Phe63. Topologically, residues Leu64–Gln94 are cytoplasmic. Residues Phe95 to Thr117 traverse the membrane as a helical segment. The Extracellular segment spans residues Lys118–Gln121. Residues Ile122–Leu142 traverse the membrane as a helical segment. Residue Pro137 is modified to Hydroxyproline. The Cytoplasmic portion of the chain corresponds to His143–Tyr153.

This sequence belongs to the ORM family. As to quaternary structure, ceramide-sensitive subunit of the serine palmitoyltransferase (SPT) complex, which is also composed of SPTLC1, SPTLC2/3 and SPTSSA/B. When hydroxylated at Pro-137, ubiquitinated via 'Lys-48'-linkage, leading to proteasomal degradation. In endothelial cells, ORMDL3 proteasomal degradation is controlled by the sphingosine 1-phosphate receptor signaling pathway.

It localises to the endoplasmic reticulum membrane. Plays an essential role in the homeostatic regulation of sphingolipid de novo biosynthesis by modulating the activity of the serine palmitoyltransferase (SPT) in response to ceramide levels. When complexed to SPT, the binding of ceramides to its N-terminus stabilizes a conformation that block SPT substrate entry, hence preventing SPT catalytic activity. Through this mechanism, maintains ceramide levels at sufficient concentrations for the production of complex sphingolipids, but which prevents the accumulation of ceramides to levels that trigger apoptosis. The chain is ORM1-like protein 3 (ORMDL3) from Ailuropoda melanoleuca (Giant panda).